A 235-amino-acid chain; its full sequence is tRNA pseudouridine synthase B (235 aa).

Residue aspartate 48 is the Nucleophile of the active site.

It belongs to the pseudouridine synthase TruB family. Type 1 subfamily.

The catalysed reaction is uridine(55) in tRNA = pseudouridine(55) in tRNA. Responsible for synthesis of pseudouridine from uracil-55 in the psi GC loop of transfer RNAs. This Phocaeicola vulgatus (strain ATCC 8482 / DSM 1447 / JCM 5826 / CCUG 4940 / NBRC 14291 / NCTC 11154) (Bacteroides vulgatus) protein is tRNA pseudouridine synthase B.